A 657-amino-acid chain; its full sequence is DNA mismatch repair protein MutL (657 aa).

This sequence belongs to the DNA mismatch repair MutL/HexB family.

Its function is as follows. This protein is involved in the repair of mismatches in DNA. It is required for dam-dependent methyl-directed DNA mismatch repair. May act as a 'molecular matchmaker', a protein that promotes the formation of a stable complex between two or more DNA-binding proteins in an ATP-dependent manner without itself being part of a final effector complex. This Streptococcus agalactiae serotype Ia (strain ATCC 27591 / A909 / CDC SS700) protein is DNA mismatch repair protein MutL.